Consider the following 237-residue polypeptide: Orotidine 5'-phosphate decarboxylase (237 aa).

Substrate is bound by residues Asp10, Lys32, 59-68, Thr118, Arg180, Gln189, Gly209, and Arg210; that span reads DLKLHDIPNT. Catalysis depends on Lys61, which acts as the Proton donor.

Belongs to the OMP decarboxylase family. Type 1 subfamily. In terms of assembly, homodimer.

The enzyme catalyses orotidine 5'-phosphate + H(+) = UMP + CO2. It participates in pyrimidine metabolism; UMP biosynthesis via de novo pathway; UMP from orotate: step 2/2. In terms of biological role, catalyzes the decarboxylation of orotidine 5'-monophosphate (OMP) to uridine 5'-monophosphate (UMP). The protein is Orotidine 5'-phosphate decarboxylase of Fusobacterium nucleatum subsp. nucleatum (strain ATCC 25586 / DSM 15643 / BCRC 10681 / CIP 101130 / JCM 8532 / KCTC 2640 / LMG 13131 / VPI 4355).